The sequence spans 318 residues: Beta-sarcoglycan (318 aa).

The disordered stretch occupies residues methionine 1–valine 32. At methionine 1–alanine 65 the chain is on the cytoplasmic side. Residues serine 21–valine 32 are compositionally biased toward basic and acidic residues. The helical; Signal-anchor for type II membrane protein transmembrane segment at isoleucine 66–isoleucine 86 threads the bilayer. Residues tryptophan 87–histidine 318 lie on the Extracellular side of the membrane. N-linked (GlcNAc...) asparagine glycosylation is found at asparagine 158, asparagine 211, and asparagine 258. Disulfide bonds link cysteine 288–cysteine 314 and cysteine 290–cysteine 307.

This sequence belongs to the sarcoglycan beta/delta/gamma/zeta family. As to quaternary structure, cross-link to form 2 major subcomplexes: one consisting of SGCB, SGCD and SGCG and the other consisting of SGCB and SGCD. The association between SGCB and SGCG is particularly strong while SGCA is loosely associated with the other sarcoglycans. Disulfide bonds are present.

The protein localises to the cell membrane. The protein resides in the sarcolemma. Its subcellular location is the cytoplasm. It is found in the cytoskeleton. Its function is as follows. Component of the sarcoglycan complex, a subcomplex of the dystrophin-glycoprotein complex which forms a link between the F-actin cytoskeleton and the extracellular matrix. The polypeptide is Beta-sarcoglycan (SGCB) (Oryctolagus cuniculus (Rabbit)).